The following is an 86-amino-acid chain: Toxin Tpa6 (86 aa).

The first 20 residues, 1–20, serve as a signal peptide directing secretion; sequence MSIFPIALALLLIGLEEGEA. The 64-residue stretch at 22–85 folds into the LCN-type CS-alpha/beta domain; the sequence is RDGYPLSKNN…WGDPGTKPCM (64 aa). 4 disulfides stabilise this stretch: Cys-33–Cys-84, Cys-37–Cys-58, Cys-43–Cys-64, and Cys-47–Cys-66.

This sequence belongs to the long (4 C-C) scorpion toxin superfamily. Sodium channel inhibitor family. Beta subfamily. In terms of tissue distribution, expressed by the venom gland.

The protein resides in the secreted. Its function is as follows. Beta toxins bind voltage-independently at site-4 of sodium channels (Nav) and shift the voltage of activation toward more negative potentials thereby affecting sodium channel activation and promoting spontaneous and repetitive firing. In Tityus pachyurus (Colombian scorpion), this protein is Toxin Tpa6.